A 195-amino-acid chain; its full sequence is Transcription factor 15 (195 aa).

Residues 44–65 (LEAARRGPGPGSGRRASNGAGP) form a disordered region. Low complexity predominate over residues 56 to 65 (GRRASNGAGP). Ser60 carries the phosphoserine modification. The bHLH domain maps to 70–122 (RQRQAANARERDRTQSVNTAFTALRTLIPTEPVDRKLSKIETLRLASSYIAHL).

Heterodimer; efficient DNA binding requires dimerization with another bHLH protein, such as TCF3/E12. Interacts with MEOX2. Expressed in heart and skeletal muscle. Specifically expressed in a subpopulation of embryonic stem cells (ESCs), that are still undifferentiated but primed for ifferentiation. Expressed in hematopoietic stem cells (HSCs).

The protein resides in the nucleus. Functionally, early transcription factor that plays a key role in somitogenesis, paraxial mesoderm development and regulation of stem cell pluripotency. Essential for the mesenchymal to epithelial transition associated with somite formation. Required for somite morphogenesis, thereby regulating patterning of the axial skeleton and skeletal muscles. Required for proper localization of somite epithelium markers during the mesenchymal to epithelial transition. Also plays a key role in regulation of stem cell pluripotency. Promotes pluripotency exit of embryonic stem cells (ESCs) by priming ESCs for differentiation. Acts as a key regulator of self-renewal of hematopoietic stem cells (HSCs) by mediating HSCs quiescence and long-term self-renewal. Together with MEOX2, regulates transcription in heart endothelial cells to regulate fatty acid transport across heart endothelial cells. Acts by forming a heterodimer with another helix-loop-helix (bHLH) protein, such as TCF3/E12, that binds DNA on E-box motifs (5'-CANNTG-3') and activates transcription of target genes. The polypeptide is Transcription factor 15 (Mus musculus (Mouse)).